The following is a 792-amino-acid chain: Type 2 topoisomerase subunit B (792 aa).

In terms of domain architecture, Toprim spans 423–537; it reads CEIFLVEGDS…EGYVYIAEPP (115 aa). 3 residues coordinate Mg(2+): Glu-429, Asp-502, and Asp-504.

It belongs to the type II topoisomerase GyrB family. Heterotetramer, composed of two GyrA and two GyrB chains. In the heterotetramer, 'GyrA' contains the active site tyrosine that forms a transient covalent intermediate with DNA, while 'GyrB' binds cofactors and catalyzes ATP hydrolysis. Mg(2+) is required as a cofactor. Mn(2+) serves as cofactor. It depends on Ca(2+) as a cofactor.

Its subcellular location is the cytoplasm. The enzyme catalyses ATP-dependent breakage, passage and rejoining of double-stranded DNA.. In terms of biological role, a type II topoisomerase. Despite its similarity to DNA gyrase, this enzyme is not able to supercoil DNA, and instead acts like topoisomerase IV. Relaxes both positively and negatively supercoiled DNA in an ATP-dependent fashion, decatenates interlocked circles. If this subunit is reconstituted with GyrA from E.coli the hybrid enzyme supercoils relaxed plasmid DNA; if paired with E.coli ParC supercoiling is not restored. This the first bacteria shown to not contain DNA gyrase, although it has 2 copies of a reverse gyrase that introduces positive supercoils. Type II topoisomerases break and join 2 DNA strands simultaneously in an ATP-dependent manner. This chain is Type 2 topoisomerase subunit B, found in Aquifex aeolicus (strain VF5).